The following is a 226-amino-acid chain: Ribonuclease 3 (226 aa).

One can recognise an RNase III domain in the interval 6 to 128 (ANKIQQILGY…LIGSIYLDSN (123 aa)). Position 41 (glutamate 41) interacts with Mg(2+). Aspartate 45 is a catalytic residue. Mg(2+) contacts are provided by asparagine 114 and glutamate 117. Glutamate 117 is a catalytic residue. The DRBM domain maps to 155–225 (DPKTRLQEYL…ARKALIKLGV (71 aa)).

It belongs to the ribonuclease III family. In terms of assembly, homodimer. Mg(2+) is required as a cofactor.

It localises to the cytoplasm. It catalyses the reaction Endonucleolytic cleavage to 5'-phosphomonoester.. In terms of biological role, digests double-stranded RNA. Involved in the processing of primary rRNA transcript to yield the immediate precursors to the large and small rRNAs (23S and 16S). Processes some mRNAs, and tRNAs when they are encoded in the rRNA operon. Processes pre-crRNA and tracrRNA of type II CRISPR loci if present in the organism. The chain is Ribonuclease 3 from Buchnera aphidicola subsp. Schizaphis graminum (strain Sg).